The chain runs to 517 residues: Ribonuclease Y (517 aa).

The helical transmembrane segment at 1–21 threads the bilayer; sequence MIESLIALIAAIVGLGIGYLV. The region spanning 207 to 273 is the KH domain; the sequence is LINVINIKND…TKVIELLVED (67 aa). One can recognise an HD domain in the interval 333 to 426; the sequence is ALAHSLEVAH…VCAADTLSAA (94 aa).

Belongs to the RNase Y family.

The protein localises to the cell membrane. Functionally, endoribonuclease that initiates mRNA decay. The sequence is that of Ribonuclease Y from Campylobacter jejuni subsp. doylei (strain ATCC BAA-1458 / RM4099 / 269.97).